A 252-amino-acid polypeptide reads, in one-letter code: Ditrans,polycis-undecaprenyl-diphosphate synthase ((2E,6E)-farnesyl-diphosphate specific) (252 aa).

The active site involves Asp25. Asp25 lines the Mg(2+) pocket. Substrate contacts are provided by residues 26 to 29, Trp30, Arg38, His42, and 70 to 72; these read GNGR and SSE. Residue Asn73 is the Proton acceptor of the active site. Residues Trp74, Arg76, and Arg193 each contribute to the substrate site. His198 is a Mg(2+) binding site. Residue 199–201 participates in substrate binding; the sequence is RIS. Residue Glu212 participates in Mg(2+) binding.

It belongs to the UPP synthase family. In terms of assembly, homodimer. Requires Mg(2+) as cofactor.

The catalysed reaction is 8 isopentenyl diphosphate + (2E,6E)-farnesyl diphosphate = di-trans,octa-cis-undecaprenyl diphosphate + 8 diphosphate. Functionally, catalyzes the sequential condensation of isopentenyl diphosphate (IPP) with (2E,6E)-farnesyl diphosphate (E,E-FPP) to yield (2Z,6Z,10Z,14Z,18Z,22Z,26Z,30Z,34E,38E)-undecaprenyl diphosphate (di-trans,octa-cis-UPP). UPP is the precursor of glycosyl carrier lipid in the biosynthesis of bacterial cell wall polysaccharide components such as peptidoglycan and lipopolysaccharide. This chain is Ditrans,polycis-undecaprenyl-diphosphate synthase ((2E,6E)-farnesyl-diphosphate specific), found in Salmonella paratyphi A (strain ATCC 9150 / SARB42).